The sequence spans 409 residues: Arginine deiminase (409 aa).

C399 (amidino-cysteine intermediate) is an active-site residue.

The protein belongs to the arginine deiminase family.

The protein resides in the cytoplasm. The catalysed reaction is L-arginine + H2O = L-citrulline + NH4(+). It functions in the pathway amino-acid degradation; L-arginine degradation via ADI pathway; carbamoyl phosphate from L-arginine: step 1/2. This is Arginine deiminase from Borrelia duttonii (strain Ly).